A 262-amino-acid polypeptide reads, in one-letter code: MKNIHQTAVVEDGARIGEDVKIEAYAFVSKDAVLGDNVTIKQGARVIGNTQIGDNSKIFSYAIVGDIPQDISYHDEENTGVIIGKNATIREFCTINSGTHKGDGLTRIGENAFIMAYCHIAHDCLIGNNIILANNATLAGHVELGDYAVVGGLTPIHQFVKVGESCMIAGASALSQDVVPFCLAEGNRAYIRSLNLVGIRRRFEKEQVEELVKAYKFLFNQGVSLKDQAGELFEKTNDTNVKKMCKFILETTRGIPLAKGRD.

It belongs to the transferase hexapeptide repeat family. LpxA subfamily. Homotrimer.

It localises to the cytoplasm. It catalyses the reaction a (3R)-hydroxyacyl-[ACP] + UDP-N-acetyl-alpha-D-glucosamine = a UDP-3-O-[(3R)-3-hydroxyacyl]-N-acetyl-alpha-D-glucosamine + holo-[ACP]. It participates in glycolipid biosynthesis; lipid IV(A) biosynthesis; lipid IV(A) from (3R)-3-hydroxytetradecanoyl-[acyl-carrier-protein] and UDP-N-acetyl-alpha-D-glucosamine: step 1/6. Functionally, involved in the biosynthesis of lipid A, a phosphorylated glycolipid that anchors the lipopolysaccharide to the outer membrane of the cell. The polypeptide is Acyl-[acyl-carrier-protein]--UDP-N-acetylglucosamine O-acyltransferase (Campylobacter curvus (strain 525.92)).